A 404-amino-acid polypeptide reads, in one-letter code: MNQILPNSFRSGPDERGHFGIFGGRFVAETLMPLILALEKAYAEAKDDPAFRAEMDGYLKHYVGRPSPLYFAERLTEHFGGAKIYFKREDLNHTGAHKVNNVLGQIMLARRMGKPRIIAETGAGMHGVATATMCAKFGLQCVVYMGAVDVDRQQPNVLRMKALGAEVRPVTSGAATLKDAMNEALRDWVTNVHDTFYCIGTVAGPHPYPMMVRDFQAVIGQEVRAQIMEAEGRLPDSLIACIGGGSNAMGLFHPFLDDSSVAIYGVEAAGHGLSKLHAASIAGGKPGVLHGNRTYLLMDTDGQIQEAHSISAGLDYPGIGPEHAWLHDVGRVEFMSATDTEALDAFKLCCRLEGIIPALEPAHALAKVGDLAPPLPKDHVMVLNMSGRGDKDLASVAEHLGGQF.

The residue at position 98 (K98) is an N6-(pyridoxal phosphate)lysine.

This sequence belongs to the TrpB family. Tetramer of two alpha and two beta chains. Pyridoxal 5'-phosphate serves as cofactor.

The enzyme catalyses (1S,2R)-1-C-(indol-3-yl)glycerol 3-phosphate + L-serine = D-glyceraldehyde 3-phosphate + L-tryptophan + H2O. It participates in amino-acid biosynthesis; L-tryptophan biosynthesis; L-tryptophan from chorismate: step 5/5. Its function is as follows. The beta subunit is responsible for the synthesis of L-tryptophan from indole and L-serine. In Rhodopseudomonas palustris (strain HaA2), this protein is Tryptophan synthase beta chain.